Consider the following 232-residue polypeptide: Large ribosomal subunit protein uL1 (232 aa).

Belongs to the universal ribosomal protein uL1 family. As to quaternary structure, part of the 50S ribosomal subunit.

Its function is as follows. Binds directly to 23S rRNA. The L1 stalk is quite mobile in the ribosome, and is involved in E site tRNA release. Functionally, protein L1 is also a translational repressor protein, it controls the translation of the L11 operon by binding to its mRNA. The protein is Large ribosomal subunit protein uL1 of Bartonella henselae (strain ATCC 49882 / DSM 28221 / CCUG 30454 / Houston 1) (Rochalimaea henselae).